A 152-amino-acid polypeptide reads, in one-letter code: Transcription factor XE1.1 (152 aa).

Disordered stretches follow at residues 1-54 (RDDF…ANNA) and 123-152 (KVSA…MGHM). 2 stretches are compositionally biased toward basic and acidic residues: residues 7-22 (DDMK…EMKS) and 38-54 (PEQK…ANNA). Residues 47-100 (ERRMANNARERLRVRDINEAFKELGRMCQLHLKSEKPQTKLLILHQAVAVILNL) form the bHLH domain. Residues 102–125 (QQVRERNLNPKAACLKRREEEKVS) are class A specific domain. Positions 143–152 (TDTTNPMGHM) are enriched in polar residues.

As to quaternary structure, efficient DNA binding requires dimerization with another bHLH protein. Forms homo- or heterooligomers with myogenin, E12 and ITF2 proteins.

The protein resides in the nucleus. Functionally, transcriptional regulator. Involved in the initiation of neuronal differentiation. Activates transcription by binding to the E box-containing promoter. The protein is Transcription factor XE1.1 of Xenopus laevis (African clawed frog).